We begin with the raw amino-acid sequence, 398 residues long: GPI mannosyltransferase 1 (398 aa).

Transmembrane regions (helical) follow at residues 4–24, 79–99, 114–136, 156–176, 209–229, 271–291, 305–325, 341–361, and 375–395; these read LKYL…FGLY, WYHF…LIIL, MILS…GSAE, VILS…PIIY, IIIT…KYGW, IEKI…PLIF, FVFV…FLIF, ITGI…LYFA, and GLMY…MKFI.

Belongs to the PIGM family.

The protein localises to the endoplasmic reticulum membrane. The protein operates within glycolipid biosynthesis; glycosylphosphatidylinositol-anchor biosynthesis. In terms of biological role, mannosyltransferase involved in glycosylphosphatidylinositol-anchor biosynthesis. Transfers the first alpha-1,4-mannose to GlcN-acyl-PI during GPI precursor assembly. Required for cell wall integrity. The polypeptide is GPI mannosyltransferase 1 (GPI14) (Candida albicans (strain SC5314 / ATCC MYA-2876) (Yeast)).